A 230-amino-acid chain; its full sequence is Cutinase (230 aa).

An N-terminal signal peptide occupies residues 1 to 16 (MKFFALTTFLAATASA). Cys47 and Cys125 are oxidised to a cystine. The active-site Nucleophile is Ser136. An intrachain disulfide couples Cys187 to Cys194. Asp191 is an active-site residue. The Proton donor/acceptor role is filled by His204.

The protein belongs to the cutinase family. Post-translationally, the 2 disulfide bonds play a critical role in holding the catalytic residues in juxta-position; reduction of the disulfide bridges results in the complete inactivation of the enzyme.

It localises to the secreted. It carries out the reaction cutin + H2O = cutin monomers.. Its function is as follows. Catalyzes the hydrolysis of complex carboxylic polyesters found in the cell wall of plants. Degrades cutin, a macromolecule that forms the structure of the plant cuticle. Allows pathogenic fungi to penetrate through the cuticular barrier into the host plant during the initial stage of fungal infection. The chain is Cutinase (CUTA) from Fusarium solani subsp. cucurbitae (Neocosmosporum cucurbitae).